We begin with the raw amino-acid sequence, 270 residues long: Putative tRNA (cytidine(32)/guanosine(34)-2'-O)-methyltransferase (270 aa).

Positions 53, 55, 78, 94, and 119 each coordinate S-adenosyl-L-methionine. Lysine 159 acts as the Proton acceptor in catalysis.

It belongs to the class I-like SAM-binding methyltransferase superfamily. RNA methyltransferase RlmE family. TRM7 subfamily.

It is found in the cytoplasm. The enzyme catalyses cytidine(32)/guanosine(34) in tRNA + 2 S-adenosyl-L-methionine = 2'-O-methylcytidine(32)/2'-O-methylguanosine(34) in tRNA + 2 S-adenosyl-L-homocysteine + 2 H(+). Functionally, methylates the 2'-O-ribose of nucleotides at positions 32 and 34 of the tRNA anticodon loop of substrate tRNAs. The polypeptide is Putative tRNA (cytidine(32)/guanosine(34)-2'-O)-methyltransferase (fsjA) (Dictyostelium discoideum (Social amoeba)).